Here is a 284-residue protein sequence, read N- to C-terminus: Ribosome-associated protein oga1 (284 aa).

The tract at residues 1–284 (MSVASKNLFD…LSETDFPALA (284 aa)) is disordered. Positions 22-36 (TEKKTAASRDKKRSD) are enriched in basic and acidic residues. A phosphoserine mark is found at serine 37 and serine 51. Composition is skewed to basic and acidic residues over residues 52-73 (RKRD…ADQP) and 119-141 (GREF…ERGW). Residue threonine 160 is modified to Phosphothreonine. Position 162 is a phosphoserine (serine 162). The residue at position 166 (threonine 166) is a Phosphothreonine. Composition is skewed to basic and acidic residues over residues 172–186 (ENVK…ERKS) and 194–209 (TVEK…KSAP). The span at 214-224 (ASLKKSASQKK) shows a compositional bias: low complexity. Over residues 226-237 (AAKESKPKKVLL) the composition is skewed to basic and acidic residues. Positions 245-254 (ARPARGGRPN) are enriched in low complexity. Positions 263-277 (ETASKTQQAPPTLSE) are enriched in polar residues.

The protein belongs to the STM1 family. Associates with mature 80S ribosomes. Binds to the head domain of the 40S ribosomal subunit and prevents mRNA binding by inserting its alpha-helix domain towards the mRNA entry tunnel at the decoding site, where it blocks the binding of tRNA and mRNA at the A- and P-sites. Interacts with eEF2; interaction sequesters eEF2 at the A-site of the ribosome, thereby blocking the interaction sites of the mRNA-tRNA complex, promoting ribosome stabilization and hibernation. Interacts with sad1. In terms of processing, phosphorylation by TORC1 upon nutrient replenishment inhibits STM1 and causes its release from dormant ribosomes.

It is found in the cytoplasm. In terms of biological role, ribosome preservation factor that protect a small pool of nontranslating, vacant ribosomes in cells under nutrient starvation conditions. Under nutrient-limiting conditions, cells reduce ribosome biogenesis and degrade ribosomes via autophagy (ribophagy) or proteasomal degradation. To avoid excessive degradation during starvation, STM1 binds to and protects 80S ribosomes from proteasomal degradation. Under nutrient-sufficient conditions, TORC1 phosphorylates and inhibits STM1 to prevent formation of dormant 80S ribosomes. Acts as an inhibitor of mRNA translation by promoting ribosome hibernation: clamps the two ribosomal subunits, thereby preventing their dissociation, and inhibits translation by excluding mRNA-binding. Acts via its association with eEF2, promoting ribosome stabilization and storage in an inactive state. May also repress translation by preventing association of eEF3 with ribosomes. Binds specifically G4 quadruplex (these are four-stranded right-handed helices, stabilized by guanine base quartets) and purine motif triplex (characterized by a third, antiparallel purine-rich DNA strand located within the major groove of a homopurine stretch of duplex DNA) nucleic acid structures. These structures may be present at telomeres or in rRNAs. Extends chronological lifespan when overexpressed. This chain is Ribosome-associated protein oga1, found in Schizosaccharomyces pombe (strain 972 / ATCC 24843) (Fission yeast).